A 652-amino-acid polypeptide reads, in one-letter code: Acetyl-coenzyme A synthetase (652 aa).

CoA-binding positions include 191–194 (RAGR), Thr-311, and Asn-335. ATP contacts are provided by residues 387–389 (GEP), 411–416 (DTWWQT), Asp-500, and Arg-515. CoA is bound at residue Ser-523. Arg-526 is an ATP binding site. Residues Val-537, His-539, and Ile-542 each contribute to the Mg(2+) site. CoA is bound at residue Arg-584. Lys-609 carries the N6-acetyllysine modification.

It belongs to the ATP-dependent AMP-binding enzyme family. Mg(2+) is required as a cofactor. Acetylated. Deacetylation by the SIR2-homolog deacetylase activates the enzyme.

The enzyme catalyses acetate + ATP + CoA = acetyl-CoA + AMP + diphosphate. In terms of biological role, catalyzes the conversion of acetate into acetyl-CoA (AcCoA), an essential intermediate at the junction of anabolic and catabolic pathways. Acs undergoes a two-step reaction. In the first half reaction, Acs combines acetate with ATP to form acetyl-adenylate (AcAMP) intermediate. In the second half reaction, it can then transfer the acetyl group from AcAMP to the sulfhydryl group of CoA, forming the product AcCoA. Its function is as follows. Enables the cell to use acetate during aerobic growth to generate energy via the TCA cycle, and biosynthetic compounds via the glyoxylate shunt. Acetylates CheY, the response regulator involved in flagellar movement and chemotaxis. This chain is Acetyl-coenzyme A synthetase, found in Citrobacter koseri (strain ATCC BAA-895 / CDC 4225-83 / SGSC4696).